A 255-amino-acid chain; its full sequence is MTSIPVSSFLLAALVLQYATSDAVNYCRLPCRGDNYHVGCGEPAYAQECGQSPRTRELLKEHRNEILSKINDVRDHVAKGSWGLPVAARMKVVVWDAELAGLAKRHTKGCVGETHACRNTERFWLPGQLNFKYSGDKLPRIKELIDDAVKKGHLQKHNITREIIGNYRENGPNGDVKELALAISDRVTAVGCGLTTWQDGAKARALLTCNFSSQNTRGRPVYKIGNSPGEKCIEKDETYKNLCPATEPIDPNKSN.

A signal peptide spans 1 to 23; the sequence is MTSIPVSSFLLAALVLQYATSDA. Intrachain disulfides connect Cys-27/Cys-40, Cys-31/Cys-117, and Cys-49/Cys-110. The short motif at 32–34 is the Cell attachment site element; that stretch reads RGD. Positions 67 to 211 constitute an SCP domain; that stretch reads LSKINDVRDH…KARALLTCNF (145 aa). Residues Trp-82, His-153, and Lys-156 each contribute to the leukotriene E4 site. 2 disulfides stabilise this stretch: Cys-192/Cys-209 and Cys-232/Cys-243.

This sequence belongs to the CRISP family. Expressed in salivary glands.

The protein localises to the secreted. Anti-inflammatory scavenger of eicosanoids and antithrombotic protein that inhibits platelets aggregation induced by collagen, ADP and convulxin (GPVI agonist). Exhibits high affinity binding for glycoprotein IIb-IIIa receptor (ITGA2B/ITGB3) and endothelial cell alphaVbeta3 (ITGAV/ITGB3) integrins, but not for alpha-5/beta-1 or alpha-2/beta-1. Accordingly, it blocks endothelial cell adhesion to vitronectin (IC(50)~1 nM) and marginally to fibronectin (IC(50)~1 uM), but not to collagen. It also inhibits fibroblast growth factor (FGF)-induced endothelial cell proliferation, and attenuates tube formation in vitro. In addition, it dose-dependently attenuates thrombus formation to collagen under flow. Also binds proinflammatory cysteinyl leukotrienes (leukotrienes C4 (LTC4), D4 (LTD4) and E4 (LTE4)) with submicromolar affinities. This Tabanus yao (Horsefly) protein is Tablysin 15.